The sequence spans 333 residues: tRNA N6-adenosine threonylcarbamoyltransferase (333 aa).

Fe cation-binding residues include His108 and His112. Substrate is bound by residues 129–133 (LVSGG), Asp161, Glu178, and Ser258. Asp286 contributes to the Fe cation binding site.

It belongs to the KAE1 / TsaD family. Fe(2+) is required as a cofactor.

Its subcellular location is the cytoplasm. The catalysed reaction is L-threonylcarbamoyladenylate + adenosine(37) in tRNA = N(6)-L-threonylcarbamoyladenosine(37) in tRNA + AMP + H(+). In terms of biological role, required for the formation of a threonylcarbamoyl group on adenosine at position 37 (t(6)A37) in tRNAs that read codons beginning with adenine. Is probably involved in the transfer of the threonylcarbamoyl moiety of threonylcarbamoyl-AMP (TC-AMP) to the N6 group of A37. This chain is tRNA N6-adenosine threonylcarbamoyltransferase, found in Pyrobaculum islandicum (strain DSM 4184 / JCM 9189 / GEO3).